The sequence spans 218 residues: Octanoyltransferase (218 aa).

A BPL/LPL catalytic domain is found at 31-206 (REAGDEVWLV…QLVKHLDYAE (176 aa)). Substrate is bound by residues 70–77 (RGGQVTYH), 137–139 (SLG), and 150–152 (GLA). Catalysis depends on C168, which acts as the Acyl-thioester intermediate.

The protein belongs to the LipB family.

It localises to the cytoplasm. It carries out the reaction octanoyl-[ACP] + L-lysyl-[protein] = N(6)-octanoyl-L-lysyl-[protein] + holo-[ACP] + H(+). It participates in protein modification; protein lipoylation via endogenous pathway; protein N(6)-(lipoyl)lysine from octanoyl-[acyl-carrier-protein]: step 1/2. Functionally, catalyzes the transfer of endogenously produced octanoic acid from octanoyl-acyl-carrier-protein onto the lipoyl domains of lipoate-dependent enzymes. Lipoyl-ACP can also act as a substrate although octanoyl-ACP is likely to be the physiological substrate. The polypeptide is Octanoyltransferase (Pseudomonas syringae pv. tomato (strain ATCC BAA-871 / DC3000)).